The sequence spans 765 residues: Probable exo-1,4-beta-xylosidase bxlB (765 aa).

An N-terminal signal peptide occupies residues 1-25; the sequence is MYSSNSRRAASILACIVSLTQLGFA. Asn67 and Asn107 each carry an N-linked (GlcNAc...) asparagine glycan. Asp293 is a catalytic residue. Residues Asn345, Asn412, Asn423, Asn464, and Asn761 are each glycosylated (N-linked (GlcNAc...) asparagine).

The protein belongs to the glycosyl hydrolase 3 family.

Its subcellular location is the secreted. It catalyses the reaction Hydrolysis of (1-&gt;4)-beta-D-xylans, to remove successive D-xylose residues from the non-reducing termini.. It participates in glycan degradation; xylan degradation. In terms of biological role, xylan 1,4-beta-xylosidase involved in the hydrolysis of xylan, a major structural heterogeneous polysaccharide found in plant biomass representing the second most abundant polysaccharide in the biosphere, after cellulose. This Aspergillus terreus (strain NIH 2624 / FGSC A1156) protein is Probable exo-1,4-beta-xylosidase bxlB (bxlB).